Here is a 620-residue protein sequence, read N- to C-terminus: PAN2-PAN3 deadenylation complex subunit PAN3 (620 aa).

The C3H1-type zinc-finger motif lies at 7–36 (SAKGTLCKNILIYGYCKYENKGCAFSHRRN). Disordered regions lie at residues 39 to 73 (ANSG…QPST) and 95 to 168 (VFVP…QPGP). 2 stretches are compositionally biased toward polar residues: residues 63-73 (NVNTPSFQPST) and 101-126 (TPAS…TVSN). The tract at residues 226 to 482 (QSYPGGPEIV…LESYIRKHLA (257 aa)) is pseudokinase domain. ATP-binding positions include R274, 323–330 (DYYPNAST), and 380–381 (SK). Residues 483-521 (IRLLDVVDMLEDSNDYLESQLSTELENARLVRLMTKINF) adopt a coiled-coil conformation. The segment at 522–620 (IVDRPEWDNE…SVFRTITRGK (99 aa)) is knob domain.

Belongs to the protein kinase superfamily. PAN3 family. Homodimer. Forms a heterotrimer with a catalytic subunit PAN2 to form the poly(A)-nuclease (PAN) deadenylation complex. Interacts (via PAM-2 motif) with poly(A)-binding protein PAB1 (via PABC domain), conferring substrate specificity of the enzyme complex.

It is found in the cytoplasm. Functionally, regulatory subunit of the poly(A)-nuclease (PAN) deadenylation complex, one of two cytoplasmic mRNA deadenylases involved in mRNA turnover. PAN specifically shortens poly(A) tails of RNA and the activity is stimulated by poly(A)-binding protein PAB1. PAN deadenylation is followed by rapid degradation of the shortened mRNA tails by the CCR4-NOT complex. Deadenylated mRNAs are then degraded by two alternative mechanisms, namely exosome-mediated 3'-5' exonucleolytic degradation, or deadenylation-dependent mRNA decaping and subsequent 5'-3' exonucleolytic degradation by XRN1. May also be involved in post-transcriptional maturation of mRNA poly(A) tails. PAN3 acts as a positive regulator for PAN activity, recruiting the catalytic subunit PAN2 to mRNA via its interaction with RNA and with PAB1. The polypeptide is PAN2-PAN3 deadenylation complex subunit PAN3 (Meyerozyma guilliermondii (strain ATCC 6260 / CBS 566 / DSM 6381 / JCM 1539 / NBRC 10279 / NRRL Y-324) (Yeast)).